Consider the following 340-residue polypeptide: Ribosomal RNA small subunit methyltransferase C (340 aa).

This sequence belongs to the methyltransferase superfamily. RsmC family. As to quaternary structure, monomer.

Its subcellular location is the cytoplasm. It carries out the reaction guanosine(1207) in 16S rRNA + S-adenosyl-L-methionine = N(2)-methylguanosine(1207) in 16S rRNA + S-adenosyl-L-homocysteine + H(+). In terms of biological role, specifically methylates the guanine in position 1207 of 16S rRNA in the 30S particle. This is Ribosomal RNA small subunit methyltransferase C from Vibrio vulnificus (strain CMCP6).